Consider the following 364-residue polypeptide: UDP-N-acetylglucosamine--N-acetylmuramyl-(pentapeptide) pyrophosphoryl-undecaprenol N-acetylglucosamine transferase (364 aa).

Residues 10-12 (TGG), Asn-124, Arg-166, Ser-196, and Gln-297 each bind UDP-N-acetyl-alpha-D-glucosamine.

The protein belongs to the glycosyltransferase 28 family. MurG subfamily.

Its subcellular location is the cell membrane. It carries out the reaction di-trans,octa-cis-undecaprenyl diphospho-N-acetyl-alpha-D-muramoyl-L-alanyl-D-glutamyl-meso-2,6-diaminopimeloyl-D-alanyl-D-alanine + UDP-N-acetyl-alpha-D-glucosamine = di-trans,octa-cis-undecaprenyl diphospho-[N-acetyl-alpha-D-glucosaminyl-(1-&gt;4)]-N-acetyl-alpha-D-muramoyl-L-alanyl-D-glutamyl-meso-2,6-diaminopimeloyl-D-alanyl-D-alanine + UDP + H(+). It participates in cell wall biogenesis; peptidoglycan biosynthesis. Functionally, cell wall formation. Catalyzes the transfer of a GlcNAc subunit on undecaprenyl-pyrophosphoryl-MurNAc-pentapeptide (lipid intermediate I) to form undecaprenyl-pyrophosphoryl-MurNAc-(pentapeptide)GlcNAc (lipid intermediate II). This is UDP-N-acetylglucosamine--N-acetylmuramyl-(pentapeptide) pyrophosphoryl-undecaprenol N-acetylglucosamine transferase from Caldanaerobacter subterraneus subsp. tengcongensis (strain DSM 15242 / JCM 11007 / NBRC 100824 / MB4) (Thermoanaerobacter tengcongensis).